Reading from the N-terminus, the 500-residue chain is Apolipoprotein N-acyltransferase (500 aa).

6 helical membrane-spanning segments follow: residues 5-25 (VAPFAAWFLAWIALAPLWIFV), 38-58 (LLLLGLTWGIGYHGVALFWIT), 74-94 (LAITIFCWSFISFYGGLFGAI), 111-131 (ILIGTAMWCVLESLWSAGPLW), 145-165 (AILHLGQISGPNLVTAAIVSV), and 185-205 (LAIATGLLITLHLIGFGLYTA). In terms of domain architecture, CN hydrolase spans 215–462 (LKVGIVQGNI…ETIYRRQTQN (248 aa)). Catalysis depends on Glu261, which acts as the Proton acceptor. The active site involves Lys318. Cys369 functions as the Nucleophile in the catalytic mechanism. A helical transmembrane segment spans residues 469-489 (DWFTPLLVGLSFLGWSLNIFW).

Belongs to the CN hydrolase family. Apolipoprotein N-acyltransferase subfamily.

The protein resides in the cell inner membrane. The catalysed reaction is N-terminal S-1,2-diacyl-sn-glyceryl-L-cysteinyl-[lipoprotein] + a glycerophospholipid = N-acyl-S-1,2-diacyl-sn-glyceryl-L-cysteinyl-[lipoprotein] + a 2-acyl-sn-glycero-3-phospholipid + H(+). It functions in the pathway protein modification; lipoprotein biosynthesis (N-acyl transfer). Catalyzes the phospholipid dependent N-acylation of the N-terminal cysteine of apolipoprotein, the last step in lipoprotein maturation. This is Apolipoprotein N-acyltransferase from Nostoc sp. (strain PCC 7120 / SAG 25.82 / UTEX 2576).